The chain runs to 736 residues: DNA topoisomerase 1 (736 aa).

The region spanning 2-113 (KHLIIVESPA…SYPRIVFHEI (112 aa)) is the Toprim domain. Positions 8 and 82 each coordinate Mg(2+). Residues 129-552 (DMFKVNAQQA…DFYYPFMDKI (424 aa)) form the Topo IA-type catalytic domain. The interaction with DNA stretch occupies residues 163–168 (SAGRVQ). The active-site O-(5'-phospho-DNA)-tyrosine intermediate is the Tyr-297. C4-type zinc fingers lie at residues 572–598 (CPKC…YPKC), 616–642 (CEKC…YPEC), 663–689 (CPEC…YPKC), and 702–725 (CEKC…CIQC).

The protein belongs to the type IA topoisomerase family. In terms of assembly, monomer. Mg(2+) serves as cofactor.

It carries out the reaction ATP-independent breakage of single-stranded DNA, followed by passage and rejoining.. In terms of biological role, releases the supercoiling and torsional tension of DNA, which is introduced during the DNA replication and transcription, by transiently cleaving and rejoining one strand of the DNA duplex. Introduces a single-strand break via transesterification at a target site in duplex DNA. The scissile phosphodiester is attacked by the catalytic tyrosine of the enzyme, resulting in the formation of a DNA-(5'-phosphotyrosyl)-enzyme intermediate and the expulsion of a 3'-OH DNA strand. The free DNA strand then undergoes passage around the unbroken strand, thus removing DNA supercoils. Finally, in the religation step, the DNA 3'-OH attacks the covalent intermediate to expel the active-site tyrosine and restore the DNA phosphodiester backbone. This Helicobacter pylori (strain J99 / ATCC 700824) (Campylobacter pylori J99) protein is DNA topoisomerase 1.